Consider the following 364-residue polypeptide: Mitogen-activated protein kinase 11 (364 aa).

In terms of domain architecture, Protein kinase spans 24-308; it reads LQGLRPVGSG…AAEALAHAYF (285 aa). Residues 30-38 and Lys-53 each bind ATP; that span reads VGSGAYGSV. A nilotinib-binding site is contributed by Glu-71. Asp-150 acts as the Proton acceptor in catalysis. The residue at position 180 (Thr-180) is a Phosphothreonine; by MAP2K3, MAP2K4 and MAP2K6. Positions 180–182 match the TXY motif; that stretch reads TGY. Tyr-182 bears the Phosphotyrosine; by MAP2K3, MAP2K4 and MAP2K6 mark. Disordered stretches follow at residues 311-331 and 343-364; these read YHDPEDEPEAEPYDESVEAKE and QEVLSFKPPEPPKPPGSLEIEQ. The span at 314–326 shows a compositional bias: acidic residues; that stretch reads PEDEPEAEPYDES. Tyr-323 carries the phosphotyrosine; by ZAP70 modification.

This sequence belongs to the protein kinase superfamily. CMGC Ser/Thr protein kinase family. MAP kinase subfamily. As to quaternary structure, interacts with HDAC3 and DUSP16. Mg(2+) serves as cofactor. In terms of processing, dually phosphorylated on Thr-180 and Tyr-182 by MAP2K3/MKK3, MAP2K4/MKK4 and MAP2K6/MKK6, which activates the enzyme. Highest levels in the brain and heart. Also expressed in the placenta, lung, liver, skeletal muscle, kidney and pancreas.

It localises to the cytoplasm. The protein localises to the nucleus. It carries out the reaction L-seryl-[protein] + ATP = O-phospho-L-seryl-[protein] + ADP + H(+). The enzyme catalyses L-threonyl-[protein] + ATP = O-phospho-L-threonyl-[protein] + ADP + H(+). With respect to regulation, activated by phosphorylation on threonine and tyrosine by MAP2K3/MKK3, MAP2K4/MKK4 and MAP2K6/MKK6. MAP2K3/MKK3 and MAP2K6/MKK6 are both essential for the activation of MAPK11 induced by environmental stress. HDAC3 interacts directly and selectively with MAPK11 to repress ATF2 transcriptional activity, and regulate TNF gene expression in LPS-stimulated cells. Inhibited by SB203580 and pyridinyl-imidazole related compounds. Its function is as follows. Serine/threonine kinase which acts as an essential component of the MAP kinase signal transduction pathway. MAPK11 is one of the four p38 MAPKs which play an important role in the cascades of cellular responses evoked by extracellular stimuli such as pro-inflammatory cytokines or physical stress leading to direct activation of transcription factors. Accordingly, p38 MAPKs phosphorylate a broad range of proteins and it has been estimated that they may have approximately 200 to 300 substrates each. MAPK11 functions are mostly redundant with those of MAPK14. Some of the targets are downstream kinases which are activated through phosphorylation and further phosphorylate additional targets. RPS6KA5/MSK1 and RPS6KA4/MSK2 can directly phosphorylate and activate transcription factors such as CREB1, ATF1, the NF-kappa-B isoform RELA/NFKB3, STAT1 and STAT3, but can also phosphorylate histone H3 and the nucleosomal protein HMGN1. RPS6KA5/MSK1 and RPS6KA4/MSK2 play important roles in the rapid induction of immediate-early genes in response to stress or mitogenic stimuli, either by inducing chromatin remodeling or by recruiting the transcription machinery. On the other hand, two other kinase targets, MAPKAPK2/MK2 and MAPKAPK3/MK3, participate in the control of gene expression mostly at the post-transcriptional level, by phosphorylating ZFP36 (tristetraprolin) and ELAVL1, and by regulating EEF2K, which is important for the elongation of mRNA during translation. MKNK1/MNK1 and MKNK2/MNK2, two other kinases activated by p38 MAPKs, regulate protein synthesis by phosphorylating the initiation factor EIF4E2. In the cytoplasm, the p38 MAPK pathway is an important regulator of protein turnover. For example, CFLAR is an inhibitor of TNF-induced apoptosis whose proteasome-mediated degradation is regulated by p38 MAPK phosphorylation. Ectodomain shedding of transmembrane proteins is regulated by p38 MAPKs as well. In response to inflammatory stimuli, p38 MAPKs phosphorylate the membrane-associated metalloprotease ADAM17. Such phosphorylation is required for ADAM17-mediated ectodomain shedding of TGF-alpha family ligands, which results in the activation of EGFR signaling and cell proliferation. Additional examples of p38 MAPK substrates are the FGFR1. FGFR1 can be translocated from the extracellular space into the cytosol and nucleus of target cells, and regulates processes such as rRNA synthesis and cell growth. FGFR1 translocation requires p38 MAPK activation. In the nucleus, many transcription factors are phosphorylated and activated by p38 MAPKs in response to different stimuli. Classical examples include ATF1, ATF2, ATF6, ELK1, PTPRH, DDIT3, TP53/p53 and MEF2C and MEF2A. The p38 MAPKs are emerging as important modulators of gene expression by regulating chromatin modifiers and remodelers. The promoters of several genes involved in the inflammatory response, such as IL6, IL8 and IL12B, display a p38 MAPK-dependent enrichment of histone H3 phosphorylation on 'Ser-10' (H3S10ph) in LPS-stimulated myeloid cells. This phosphorylation enhances the accessibility of the cryptic NF-kappa-B-binding sites marking promoters for increased NF-kappa-B recruitment. Phosphorylates NLRP1 downstream of MAP3K20/ZAK in response to UV-B irradiation and ribosome collisions, promoting activation of the NLRP1 inflammasome and pyroptosis. Phosphorylates methyltransferase DOT1L on 'Ser-834', 'Thr-900', 'Ser-902', 'Thr-984', 'Ser-1001', 'Ser-1009' and 'Ser-1104'. This chain is Mitogen-activated protein kinase 11 (MAPK11), found in Homo sapiens (Human).